Reading from the N-terminus, the 626-residue chain is tRNA 5-methylaminomethyl-2-thiouridine biosynthesis bifunctional protein MnmC (626 aa).

Residues 1 to 237 (MKGPQLDYAD…KRDMTVGVFQ (237 aa)) are tRNA (mnm(5)s(2)U34)-methyltransferase. Positions 255–626 (IGSGLSGANV…RVLPNRFSQE (372 aa)) are FAD-dependent cmnm(5)s(2)U34 oxidoreductase.

This sequence in the N-terminal section; belongs to the methyltransferase superfamily. tRNA (mnm(5)s(2)U34)-methyltransferase family. The protein in the C-terminal section; belongs to the DAO family. FAD serves as cofactor.

Its subcellular location is the cytoplasm. It catalyses the reaction 5-aminomethyl-2-thiouridine(34) in tRNA + S-adenosyl-L-methionine = 5-methylaminomethyl-2-thiouridine(34) in tRNA + S-adenosyl-L-homocysteine + H(+). Catalyzes the last two steps in the biosynthesis of 5-methylaminomethyl-2-thiouridine (mnm(5)s(2)U) at the wobble position (U34) in tRNA. Catalyzes the FAD-dependent demodification of cmnm(5)s(2)U34 to nm(5)s(2)U34, followed by the transfer of a methyl group from S-adenosyl-L-methionine to nm(5)s(2)U34, to form mnm(5)s(2)U34. The sequence is that of tRNA 5-methylaminomethyl-2-thiouridine biosynthesis bifunctional protein MnmC from Hahella chejuensis (strain KCTC 2396).